The chain runs to 318 residues: Taste receptor type 2 member 60 (318 aa).

Topologically, residues methionine 1–valine 7 are extracellular. The helical transmembrane segment at leucine 8–arginine 28 threads the bilayer. Topologically, residues leucine 29–alanine 40 are cytoplasmic. Residues alanine 41–serine 61 form a helical membrane-spanning segment. The Extracellular segment spans residues leucine 62–proline 88. A helical transmembrane segment spans residues tyrosine 89 to tryptophan 109. Over phenylalanine 110–proline 128 the chain is Cytoplasmic. The chain crosses the membrane as a helical span at residues valine 129–valine 149. At glycine 150 to asparagine 183 the chain is on the extracellular side. N-linked (GlcNAc...) asparagine glycosylation occurs at asparagine 179. A helical membrane pass occupies residues serine 184–methionine 204. Topologically, residues proline 205–phenylalanine 234 are cytoplasmic. Residues arginine 235–leucine 255 traverse the membrane as a helical segment. Residues phenylalanine 256–valine 264 are Extracellular-facing. A helical membrane pass occupies residues phenylalanine 265–isoleucine 285. Topologically, residues tyrosine 286–proline 318 are cytoplasmic.

This sequence belongs to the G-protein coupled receptor T2R family.

The protein localises to the membrane. Functionally, receptor that may play a role in the perception of bitterness and is gustducin-linked. May play a role in sensing the chemical composition of the gastrointestinal content. The activity of this receptor may stimulate alpha gustducin, mediate PLC-beta-2 activation and lead to the gating of TRPM5. The sequence is that of Taste receptor type 2 member 60 (TAS2R60) from Gorilla gorilla gorilla (Western lowland gorilla).